An 867-amino-acid polypeptide reads, in one-letter code: Replication origin-binding protein (867 aa).

The interval 1 to 39 (MNVATCTHQTHHAARAPGATSAPGAASGDPLGARRPIGD) is disordered. The segment covering 15-28 (RAPGATSAPGAASG) has biased composition (low complexity). The region spanning 86 to 251 (ASAPTARCVT…CSLRGEKNVH (166 aa)) is the Helicase ATP-binding domain. An ATP-binding site is contributed by 99-106 (APMGSGKT).

The protein belongs to the herpesviridae OriBP family. In terms of assembly, homodimer. Interacts with the major DNA-binding protein ICP8. Interacts with the helicase/primase component UL8 and the polymerase accessory protein UL42.

It is found in the host nucleus. In terms of biological role, functions as a docking protein to recruit essential components of the viral replication machinery to viral DNA origins. In the presence of the major DNA-binding protein, opens dsDNA leading to a conformational change in the origin that facilitates DNA unwinding and subsequent replication. This chain is Replication origin-binding protein, found in Human herpesvirus 2 (strain HG52) (HHV-2).